Consider the following 66-residue polypeptide: Large ribosomal subunit protein bL32 (66 aa).

The interval 1–20 is disordered; the sequence is MAVPKRRKSKSKVRTKRAHH.

Belongs to the bacterial ribosomal protein bL32 family.

The sequence is that of Large ribosomal subunit protein bL32 from Leptospira borgpetersenii serovar Hardjo-bovis (strain JB197).